Consider the following 300-residue polypeptide: Movement protein (300 aa).

Belongs to the alfamovirus movement protein family.

Its subcellular location is the host cell junction. It is found in the host plasmodesma. In terms of biological role, transports viral genome to neighboring plant cells directly through plasmosdesmata, without any budding. The movement protein allows efficient cell to cell propagation, by bypassing the host cell wall barrier. Acts by forming a tubular structure at the host plasmodesmata, enlarging it enough to allow free passage of virion capsids. In Alfalfa mosaic virus (AMV), this protein is Movement protein.